Reading from the N-terminus, the 451-residue chain is METAWSNILNYKNVSDRYILTEKDKKGAFTRQYFEVYEARLKELKPRILENAEREIGKGKFTHSQLSDAKQDEEIFVVGVIVKRIAARPSILKSLLNEDKVAYDDYEEDAEEDEVKRYAGSIEDRIELESDKQTVRLEGNISMDECATGCCVGVLGKLGKEGVFHVNRLVWPSVKVPKKVAVDGTIAFVSGLDLTGDLEDDRLTISGLEFMADWMNVQVGNENQCPPIDRLVVIGPLVETKSNGCDVQSVVRTLTLSRAEKHSSTASLITVDKIINSIAEKPLVNTVDVTPGVGDPCSSMWPLPPIHRVCLPRCGMSDKKVNLVTNPYEFEVNGLRVMTMSGENVSELLRTSLKWTGADAIENIIKWQHVAPNCPDTLDAFPVAERDPLIMDITPHVIICGNQPHAEFRHIPIDGSNCLVVCLPKFSKTRVACFLNLSDLSLKWQNFDHQF.

The protein belongs to the DNA polymerase delta/II small subunit family. In terms of assembly, heterodimer with subunits of 125 kDa and 50 kDa.

The protein localises to the nucleus. The catalysed reaction is DNA(n) + a 2'-deoxyribonucleoside 5'-triphosphate = DNA(n+1) + diphosphate. Functionally, the function of the small subunit is not yet clear. This is Probable DNA polymerase delta small subunit from Caenorhabditis elegans.